Consider the following 607-residue polypeptide: MGIRKKLVQSLLFNSISQNNFGLILQNNLFGKADAVIFDHMLVMHSMCFVPISPGMDAREHIITNTLNFYTRYSKTIATASTLFILCEDGLQSVKPAVRDKRNEHVPTPALVYFKHHKAELAKALVEKMQMEGICTLFITGYNGRSMSYQYMNGTGKRPAVPVELVMDRFVADCKEVEADMMMYAMAAHYSRRYPGHLVVITTRDTDVVPSGLALLADKGPEYLGNTVIEFKTPMFNGLKDHDRAVSDFLHVSNPTNSHKLILNRFAQFTPQRFFKADGFGGGTIEGGLFNLLFDSTNISPFAALIDKFVQTTASLDAEELLGIIRFFIACLRAGFRGTIFRRIFMRYLDDDPSTRETVTKFMGAMDTAADKYALLGDFLSQTNSYIANRTIKQLSPDYDWDIIDDADQSDGLGNCTLGQPYMVTTTSLSNRCIKGLVSLAKMYNEHRLPLDSYGSYIRMQTTHGHCYVRFAPVKASTAAVVACTLAGADYNLTIPKLGSVQIMNLLLNPDFIEMCEKTRFSVEEHGAEFIWKMISMTKLRKKTPVDPGLDGYIDCVWRTLCYTIQTWQLKTPVAGPDYGFNVRDSMVYFVIDDPSAFKNVFTLGRK.

This is an uncharacterized protein from Ictalurid herpesvirus 1 (strain Auburn) (IcHV-1).